A 32-amino-acid polypeptide reads, in one-letter code: Photosystem II reaction center protein Z (32 aa).

The helical transmembrane segment at Ile12 to Ile32 threads the bilayer.

It belongs to the PsbZ family. As to quaternary structure, PSII is composed of 1 copy each of membrane proteins PsbA, PsbB, PsbC, PsbD, PsbE, PsbF, PsbH, PsbI, PsbJ, PsbK, PsbL, PsbM, PsbT, PsbY, PsbZ, Psb30/Ycf12, at least 3 peripheral proteins of the oxygen-evolving complex and a large number of cofactors. It forms dimeric complexes.

It localises to the plastid. The protein localises to the chloroplast thylakoid membrane. Functionally, may control the interaction of photosystem II (PSII) cores with the light-harvesting antenna, regulates electron flow through the 2 photosystem reaction centers. PSII is a light-driven water plastoquinone oxidoreductase, using light energy to abstract electrons from H(2)O, generating a proton gradient subsequently used for ATP formation. In Euglena anabaena (Euglenaria anabaena), this protein is Photosystem II reaction center protein Z.